The primary structure comprises 302 residues: Geranylgeranyl diphosphate synthase (302 aa).

3 residues coordinate isopentenyl diphosphate: K53, R56, and H87. Residues D94 and D100 each contribute to the Mg(2+) site. R105 lines the (2E,6E)-farnesyl diphosphate pocket. An isopentenyl diphosphate-binding site is contributed by R106. Residues K189, T190, and Q227 each contribute to the (2E,6E)-farnesyl diphosphate site.

It belongs to the FPP/GGPP synthase family. It depends on Mg(2+) as a cofactor.

The catalysed reaction is isopentenyl diphosphate + (2E,6E)-farnesyl diphosphate = (2E,6E,10E)-geranylgeranyl diphosphate + diphosphate. Its pathway is isoprenoid biosynthesis; geranylgeranyl diphosphate biosynthesis; geranylgeranyl diphosphate from farnesyl diphosphate and isopentenyl diphosphate: step 1/1. Catalyzes the condensation of farnesyl diphosphate (FPP) and isopentenyl diphosphate (IPP) to yield geranylgeranyl diphosphate (GGPP) needed for biosynthesis of carotenoids and diterpenes. The chain is Geranylgeranyl diphosphate synthase (crtE) from Pantoea ananas (Erwinia uredovora).